A 605-amino-acid polypeptide reads, in one-letter code: ATP-dependent RNA helicase DBP3 (605 aa).

The tract at residues 1–124 is disordered; it reads MSAEELVASP…TPALSKKQQK (124 aa). Residues 54 to 66 are compositionally biased toward basic residues; that stretch reads KDKKDKKEKKDKK. Positions 104-114 are enriched in polar residues; that stretch reads PVSTATPTESE. Positions 175–201 match the Q motif motif; that stretch reads LSIRDLPINSKLQPFLNKFEKPTPIQA. The Helicase ATP-binding domain occupies 204–391; the sequence is WPALLSKKDV…STFLNNPLRI (188 aa). Position 217 to 224 (217 to 224) interacts with ATP; it reads AETGSGKT. The short motif at 336 to 339 is the DEAD box element; sequence DEAD. A Helicase C-terminal domain is found at 424 to 575; that stretch reads HLKAHLKVHP…EIPKEMDRFP (152 aa).

Belongs to the DEAD box helicase family. DDX5/DBP2 subfamily.

Its subcellular location is the nucleus. The protein localises to the nucleolus. It catalyses the reaction ATP + H2O = ADP + phosphate + H(+). Functionally, ATP-dependent RNA helicase required for 60S ribosomal subunit synthesis. Involved in efficient pre-rRNA processing, predominantly at site A3, which is necessary for the normal formation of 25S and 5.8S rRNAs. This chain is ATP-dependent RNA helicase DBP3 (DBP3), found in Cryptococcus neoformans var. neoformans serotype D (strain JEC21 / ATCC MYA-565) (Filobasidiella neoformans).